The following is a 260-amino-acid chain: HTH-type transcriptional repressor NanR (260 aa).

The interval 1-22 is disordered; it reads MNAFDSQAEDSPTSLGRSLRRR. One can recognise an HTH gntR-type domain in the interval 27-95; the sequence is KKLSEMVEEE…NGERARVSRP (69 aa). A DNA-binding region (H-T-H motif) is located at residues 55–74; sequence ERELMAFFNVGRPSVREALA.

The protein belongs to the NanR family.

In terms of biological role, transcriptional repressor that controls expression of the genes required for the catabolism of sialic acids. In Salmonella newport (strain SL254), this protein is HTH-type transcriptional repressor NanR.